The following is an 846-amino-acid chain: Aminopeptidase N (846 aa).

Residues E120 and G252–N256 contribute to the substrate site. H288 contributes to the Zn(2+) binding site. Catalysis depends on E289, which acts as the Proton acceptor. Positions 292 and 311 each coordinate Zn(2+).

Belongs to the peptidase M1 family. As to quaternary structure, monomer. Zn(2+) is required as a cofactor.

It is found in the cytoplasm. The catalysed reaction is Release of an N-terminal amino acid, Xaa-|-Yaa- from a peptide, amide or arylamide. Xaa is preferably Ala, but may be most amino acids including Pro (slow action). When a terminal hydrophobic residue is followed by a prolyl residue, the two may be released as an intact Xaa-Pro dipeptide.. Functionally, aminopeptidase with broad substrate specificity to several peptides. It has more affinity for oligopeptides than for dipeptides. It plays an essential role in the metabolism, it may be involved in nitrogen supply or protein turnover. This Lactococcus lactis subsp. lactis (strain IL1403) (Streptococcus lactis) protein is Aminopeptidase N (pepN).